Consider the following 149-residue polypeptide: Interleukin-2 (149 aa).

Positions 1–20 (MYRMQLLSCIALTLAVLANS) are cleaved as a signal peptide. O-linked (GalNAc...) threonine glycosylation occurs at T23. Residues C78 and C121 are joined by a disulfide bond. An N-linked (GlcNAc...) asparagine glycan is attached at N106.

It belongs to the IL-2 family.

It localises to the secreted. Its function is as follows. Cytokine produced by activated CD4-positive helper T-cells and to a lesser extend activated CD8-positive T-cells and natural killer (NK) cells that plays pivotal roles in the immune response and tolerance. Binds to a receptor complex composed of either the high-affinity trimeric IL-2R (IL2RA/CD25, IL2RB/CD122 and IL2RG/CD132) or the low-affinity dimeric IL-2R (IL2RB and IL2RG). Interaction with the receptor leads to oligomerization and conformation changes in the IL-2R subunits resulting in downstream signaling starting with phosphorylation of JAK1 and JAK3. In turn, JAK1 and JAK3 phosphorylate the receptor to form a docking site leading to the phosphorylation of several substrates including STAT5. This process leads to activation of several pathways including STAT, phosphoinositide-3-kinase/PI3K and mitogen-activated protein kinase/MAPK pathways. Functions as a T-cell growth factor and can increase NK-cell cytolytic activity as well. Promotes strong proliferation of activated B-cells and subsequently immunoglobulin production. Plays a pivotal role in regulating the adaptive immune system by controlling the survival and proliferation of regulatory T-cells, which are required for the maintenance of immune tolerance. Moreover, participates in the differentiation and homeostasis of effector T-cell subsets, including Th1, Th2, Th17 as well as memory CD8-positive T-cells. In Equus caballus (Horse), this protein is Interleukin-2 (IL2).